A 514-amino-acid polypeptide reads, in one-letter code: MKNTLKLIFFILLLFALFVSLRMFIDVAFYSDVIGIKDVSILGIISILFTVSAFLIGCVIFLENRHPSKTLTWLIVLGIFPVFGFFAYLLFGQNFRRKRMFQKKALLDEQAFLQYKGHEDYEERILRNHKHQELLFRLADRLGALNISFQTETRTLTNGDETFRAILNGLKRAKHHIHMEYYIVRDDKLGTEIKDILIQKSKEGVVVRFLYDAVGSFKLSKSYIEELNDAGVEMIPFFPVRFPILNDKINYRNHRKIVVIDGNEGFVGGLNIGDEYLGKNKYFGFWRDTHLYLRGEAVQSLQLIFLQDWFYMTGEAVLAPEYLQAKAVEGDHWGGVQLVAGGPDNKWETIKHLYFAMIASARKSIWIATPYFIPDDDILSALKVAALAGIDVRLLMPSKPDKRTVFYASRSYFPELLDAGVKIYEYEKGFLHSKIVIVDSDLASIGTANMDMRSFHLNFEVNAFLYDTDSIRKLVQDFKDDLEESSEIHGDHFHKRRLHRRIVESTYRLLSPLL.

3 helical membrane passes run 7-27, 41-61, and 71-91; these read LIFFILLLFALFVSLRMFIDV, ILGIISILFTVSAFLIGCVIF, and LTWLIVLGIFPVFGFFAYLLF. PLD phosphodiesterase domains are found at residues 249-276 and 427-454; these read INYRNHRKIVVIDGNEGFVGGLNIGDEY and EKGFLHSKIVIVDSDLASIGTANMDMRS. Active-site residues include histidine 254, lysine 256, aspartate 261, histidine 432, lysine 434, and aspartate 439.

It belongs to the phospholipase D family. Cardiolipin synthase subfamily.

The protein localises to the cell membrane. It carries out the reaction 2 a 1,2-diacyl-sn-glycero-3-phospho-(1'-sn-glycerol) = a cardiolipin + glycerol. Catalyzes the reversible phosphatidyl group transfer from one phosphatidylglycerol molecule to another to form cardiolipin (CL) (diphosphatidylglycerol) and glycerol. This chain is Cardiolipin synthase 2 (cls2), found in Bacillus cereus (strain ATCC 14579 / DSM 31 / CCUG 7414 / JCM 2152 / NBRC 15305 / NCIMB 9373 / NCTC 2599 / NRRL B-3711).